The following is a 200-amino-acid chain: 3-isopropylmalate dehydratase small subunit (200 aa).

It belongs to the LeuD family. LeuD type 1 subfamily. In terms of assembly, heterodimer of LeuC and LeuD.

The catalysed reaction is (2R,3S)-3-isopropylmalate = (2S)-2-isopropylmalate. The protein operates within amino-acid biosynthesis; L-leucine biosynthesis; L-leucine from 3-methyl-2-oxobutanoate: step 2/4. In terms of biological role, catalyzes the isomerization between 2-isopropylmalate and 3-isopropylmalate, via the formation of 2-isopropylmaleate. In Campylobacter jejuni subsp. doylei (strain ATCC BAA-1458 / RM4099 / 269.97), this protein is 3-isopropylmalate dehydratase small subunit.